The following is a 682-amino-acid chain: Zinc finger protein 16 (682 aa).

The segment covering 1-10 has biased composition (basic and acidic residues); the sequence is MPSLRTRREE. Residues 1–38 form a disordered region; the sequence is MPSLRTRREEAEMELSAPGPSPWTPAAQARVSDAPAVT. Positions 62–210 are necessary for transcription activation; the sequence is YQQPDCDTRT…GVPTAESPLI (149 aa). The segment at 209–231 adopts a C2H2-type 1; degenerate zinc-finger fold; sequence LICNECGKTFRGNPDLIQRQIVH. The C2H2-type 2; degenerate zinc-finger motif lies at 237-259; that stretch reads FMCDDCGKTFSQNSVLKNRHRSH. K253 is covalently cross-linked (Glycyl lysine isopeptide (Lys-Gly) (interchain with G-Cter in SUMO2)). C2H2-type zinc fingers lie at residues 265–287, 293–315, 321–343, 349–371, 377–399, 405–427, 433–455, and 461–483; these read YQCS…QSHH, YTCT…QKSH, YECN…QRIH, YVCS…HRTH, FECG…QRVH, YECN…HRVH, YKCS…RRIH, and HVCN…QIIH. Required for nuclear localization regions lie at residues 268-393 and 341-373; these read SECG…AHLR and RIHS…THTG. The tract at residues 473–503 is required for nuclear localization; it reads SSVLRKHQIIHTGEKPYRCSVCGKAFSHSSA. Position 487 is an N6-acetyllysine (K487). C2H2-type zinc fingers lie at residues 489–511, 517–539, 545–567, 573–595, 601–623, 629–651, and 657–679; these read YRCS…QGVH, YACH…QRVH, YECT…QRIH, HECN…QKVH, YTCV…QIIH, YKCS…QRIH, and YDCA…QLIH.

This sequence belongs to the krueppel C2H2-type zinc-finger protein family. Interacts with INCA1; the interaction inhibits INCA1 activity and induces the cell cycle process.

The protein localises to the nucleus. Its function is as follows. Acts as a transcriptional activator. Promotes cell proliferation by facilitating the cell cycle phase transition from the S to G2/M phase. Involved in both the hemin- and phorbol myristate acetate (PMA)-induced erythroid and megakaryocytic differentiation, respectively. Also plays a role as an inhibitor of cell apoptosis. The sequence is that of Zinc finger protein 16 (ZNF16) from Pan troglodytes (Chimpanzee).